We begin with the raw amino-acid sequence, 218 residues long: Cytochrome b6 (218 aa).

A helical transmembrane segment spans residues 35 to 55 (IFYCLGGITLVCFLIQFATGF). C38 is a heme c binding site. Heme b contacts are provided by H89 and H103. Transmembrane regions (helical) follow at residues 93-113 (ASMM…TGGF), 119-139 (LTWV…VTGY), and 189-209 (LHTF…FLMI). 2 residues coordinate heme b: H190 and H205.

This sequence belongs to the cytochrome b family. PetB subfamily. The 4 large subunits of the cytochrome b6-f complex are cytochrome b6, subunit IV (17 kDa polypeptide, PetD), cytochrome f and the Rieske protein, while the 4 small subunits are PetG, PetL, PetM and PetN. The complex functions as a dimer. It depends on heme b as a cofactor. Heme c is required as a cofactor.

The protein resides in the cellular thylakoid membrane. Component of the cytochrome b6-f complex, which mediates electron transfer between photosystem II (PSII) and photosystem I (PSI), cyclic electron flow around PSI, and state transitions. In Synechococcus sp. (strain CC9605), this protein is Cytochrome b6.